Here is a 439-residue protein sequence, read N- to C-terminus: Leukocyte immunoglobulin-like receptor subfamily A member 3 (439 aa).

The N-terminal stretch at 1-23 (MTPILTVLICLGLSLDPRTHVQA) is a signal peptide. Ig-like C2-type domains follow at residues 27–108 (PKPT…AGLS), 119–224 (TGAY…GVSK), 226–315 (PSLS…DPLD), and 326–415 (PFLS…SDPL). Cys49 and Cys98 form a disulfide bridge. An N-linked (GlcNAc...) asparagine glycan is attached at Asn140. Intrachain disulfides connect Cys145-Cys197, Cys157-Cys167, and Cys246-Cys297. 3 N-linked (GlcNAc...) asparagine glycosylation sites follow: Asn281, Asn302, and Asn341. Cys346 and Cys397 form a disulfide bridge. Asn431 is a glycosylation site (N-linked (GlcNAc...) asparagine).

In terms of processing, N-glycosylation is required for ligand binding. Detected in B-cells, and at lower levels in natural killer (NK) cells. Detected in peripheral blood monocytes and lung.

It is found in the secreted. Functionally, acts as a soluble receptor for class I MHC antigens. Binds both classical and non-classical HLA class I molecules but with reduced affinities compared to LILRB1 or LILRB2. Binds with high affinity to the surface of monocytes, leading to abolish LPS-induced TNF-alpha production by monocytes. The polypeptide is Leukocyte immunoglobulin-like receptor subfamily A member 3 (LILRA3) (Homo sapiens (Human)).